A 350-amino-acid chain; its full sequence is Heat-inducible transcription repressor HrcA (350 aa).

It belongs to the HrcA family.

Negative regulator of class I heat shock genes (grpE-dnaK-dnaJ and groELS operons). Prevents heat-shock induction of these operons. This Limosilactobacillus reuteri (strain DSM 20016) (Lactobacillus reuteri) protein is Heat-inducible transcription repressor HrcA.